A 314-amino-acid polypeptide reads, in one-letter code: MTSIESHPEQYWAAAGRPGPVPLALGPVHPGGPTLIDLLMALFGLSTNADLGGANADIEGDDTDRRAHAADAARKFSANEANAAEQMQGVGAQGMAQMASGIGGALSGALGGVMGPLTQLPQQAMQAGQGAMQPLMSAMQQAQGADGLAAVDGARLLDSIGGEPGLGSGAGGGDVGGGGAGGTTPTGYLGPPPVPTSSPPTTPAGAPTKSATMPPPGGASPASAHMGAAGMPMVPPGAMGARGEGSGQEKPVEKRLTAPAVPNGQPVKGRLTVPPSAPTTKPTDGKPVVRRRILLPEHKDFGRIAPDEKTDAGE.

2 helical membrane-spanning segments follow: residues 23–43 (LALGPVHPGGPTLIDLLMALF) and 98–118 (MASGIGGALSGALGGVMGPLT). The segment covering 165–184 (GLGSGAGGGDVGGGGAGGTT) has biased composition (gly residues). The interval 165-314 (GLGSGAGGGD…APDEKTDAGE (150 aa)) is disordered. Over residues 190-202 (GPPPVPTSSPPTT) the composition is skewed to pro residues. Low complexity-rich tracts occupy residues 203-212 (PAGAPTKSAT) and 219-232 (ASPASAHMGAAGMP). The chain crosses the membrane as a helical span at residues 221–241 (PASAHMGAAGMPMVPPGAMGA). Residues 294–314 (LLPEHKDFGRIAPDEKTDAGE) show a composition bias toward basic and acidic residues.

It is found in the cell membrane. This is an uncharacterized protein from Mycobacterium tuberculosis (strain ATCC 25618 / H37Rv).